A 462-amino-acid chain; its full sequence is Zinc finger CCCH domain-containing protein 34 (462 aa).

A compositionally biased stretch (basic and acidic residues) spans 1-13 (MERYGRPGEEGSR). The segment at 1-26 (MERYGRPGEEGSRSDPSLEWTSHGGE) is disordered. 3 consecutive C3H1-type zinc fingers follow at residues 54 to 82 (RPDE…HPRD), 100 to 128 (RMGH…HPRQ), and 148 to 176 (RPGE…HPVP). Residues 288–303 (TGTYQSVPSSNSTSKE) show a composition bias toward polar residues. Residues 288–310 (TGTYQSVPSSNSTSKEFPQRPDQ) are disordered. C3H1-type zinc fingers lie at residues 307–335 (RPDQ…HPVD) and 353–381 (RPGV…HSMS). Positions 405–418 (SSSLSGSSAPVSSS) are enriched in low complexity. Residues 405–462 (SSSLSGSSAPVSSSNEPTKEAVTPAVSSMVSGLSRPEPAETSGDSASVSGSIEAKTSS) are disordered. Polar residues predominate over residues 446 to 462 (SGDSASVSGSIEAKTSS).

The protein localises to the nucleus. In Arabidopsis thaliana (Mouse-ear cress), this protein is Zinc finger CCCH domain-containing protein 34.